The following is a 286-amino-acid chain: Bifunctional protein FolD (286 aa).

Residues 165 to 167 and Ser-190 contribute to the NADP(+) site; that span reads GRS.

The protein belongs to the tetrahydrofolate dehydrogenase/cyclohydrolase family. As to quaternary structure, homodimer.

It catalyses the reaction (6R)-5,10-methylene-5,6,7,8-tetrahydrofolate + NADP(+) = (6R)-5,10-methenyltetrahydrofolate + NADPH. The enzyme catalyses (6R)-5,10-methenyltetrahydrofolate + H2O = (6R)-10-formyltetrahydrofolate + H(+). The protein operates within one-carbon metabolism; tetrahydrofolate interconversion. Functionally, catalyzes the oxidation of 5,10-methylenetetrahydrofolate to 5,10-methenyltetrahydrofolate and then the hydrolysis of 5,10-methenyltetrahydrofolate to 10-formyltetrahydrofolate. The protein is Bifunctional protein FolD of Staphylococcus aureus (strain USA300).